Here is a 543-residue protein sequence, read N- to C-terminus: Chaperonin GroEL (543 aa).

ATP is bound by residues 29-32 (TLGP), 86-90 (DGTTT), Gly413, 478-480 (DAL), and Asp494. Residues 524–543 (PEPEAPAVPAGMPGGMGGMY) are disordered.

This sequence belongs to the chaperonin (HSP60) family. Forms a cylinder of 14 subunits composed of two heptameric rings stacked back-to-back. Interacts with the co-chaperonin GroES.

The protein localises to the cytoplasm. The enzyme catalyses ATP + H2O + a folded polypeptide = ADP + phosphate + an unfolded polypeptide.. Together with its co-chaperonin GroES, plays an essential role in assisting protein folding. The GroEL-GroES system forms a nano-cage that allows encapsulation of the non-native substrate proteins and provides a physical environment optimized to promote and accelerate protein folding. The polypeptide is Chaperonin GroEL (Ruminiclostridium cellulolyticum (strain ATCC 35319 / DSM 5812 / JCM 6584 / H10) (Clostridium cellulolyticum)).